The primary structure comprises 66 residues: UPF0337 protein SAG0619 (66 aa).

Positions 1 to 22 (MSQEKLKSKLDQAKGGAKEGFG) are disordered.

The protein belongs to the UPF0337 (CsbD) family.

The sequence is that of UPF0337 protein SAG0619 from Streptococcus agalactiae serotype V (strain ATCC BAA-611 / 2603 V/R).